The sequence spans 218 residues: Octanoyltransferase (218 aa).

Residues Arg-31 to Glu-206 form the BPL/LPL catalytic domain. Residues Arg-70–His-77, Ser-137–Gly-139, and Gly-150–Ala-152 contribute to the substrate site. Cys-168 (acyl-thioester intermediate) is an active-site residue.

It belongs to the LipB family.

The protein localises to the cytoplasm. It catalyses the reaction octanoyl-[ACP] + L-lysyl-[protein] = N(6)-octanoyl-L-lysyl-[protein] + holo-[ACP] + H(+). It participates in protein modification; protein lipoylation via endogenous pathway; protein N(6)-(lipoyl)lysine from octanoyl-[acyl-carrier-protein]: step 1/2. Its function is as follows. Catalyzes the transfer of endogenously produced octanoic acid from octanoyl-acyl-carrier-protein onto the lipoyl domains of lipoate-dependent enzymes. Lipoyl-ACP can also act as a substrate although octanoyl-ACP is likely to be the physiological substrate. This Pseudomonas syringae pv. tomato (strain ATCC BAA-871 / DC3000) protein is Octanoyltransferase.